Reading from the N-terminus, the 349-residue chain is Magnesium-protoporphyrin IX monomethyl ester [oxidative] cyclase (349 aa).

It belongs to the AcsF family. The cofactor is Fe cation.

It localises to the plastid. It is found in the chloroplast. It catalyses the reaction Mg-protoporphyrin IX 13-monomethyl ester + 3 NADPH + 3 O2 + 2 H(+) = 3,8-divinyl protochlorophyllide a + 3 NADP(+) + 5 H2O. It functions in the pathway porphyrin-containing compound metabolism; chlorophyll biosynthesis (light-independent). Functionally, catalyzes the formation of the isocyclic ring in chlorophyll biosynthesis. Mediates the cyclase reaction, which results in the formation of divinylprotochlorophyllide (Pchlide) characteristic of all chlorophylls from magnesium-protoporphyrin IX 13-monomethyl ester (MgPMME). The sequence is that of Magnesium-protoporphyrin IX monomethyl ester [oxidative] cyclase from Pyropia yezoensis (Susabi-nori).